Here is a 319-residue protein sequence, read N- to C-terminus: Extracellular phospholipase A1 (319 aa).

The first 24 residues, 1–24 (MSMPLSFTSAVSPVAAIPTPRAAA), serve as a signal peptide directing secretion.

The enzyme catalyses a 1,2-diacyl-sn-glycero-3-phosphocholine + H2O = a 2-acyl-sn-glycero-3-phosphocholine + a fatty acid + H(+). The chain is Extracellular phospholipase A1 (phlA) from Serratia liquefaciens.